The sequence spans 406 residues: Cholinephosphotransferase 1 (406 aa).

N-acetylalanine is present on alanine 2. At 2–62 (AAGAGARPAP…LLQWIPLWMA (61 aa)) the chain is on the cytoplasmic side. Residues 63–83 (PNSITLLGLAINMLTTLVLIS) traverse the membrane as a helical segment. Position 64 (asparagine 64) interacts with CDP-choline. At 84 to 93 (YCPTVTEEAP) the chain is on the lumenal side. Residues 94–118 (YWTYLLCALGLFIYQSLDAIDGKQA) form a helical membrane-spanning segment. Mg(2+) is bound by residues aspartate 111 and aspartate 114. Residue arginine 119 coordinates CDP-choline. Over 119-125 (RRTNSCS) the chain is Cytoplasmic. A helical transmembrane segment spans residues 126–150 (PLGELFDHGCDSLSTVFMAVGASIA). Aspartate 132 provides a ligand contact to Mg(2+). Histidine 133 (proton acceptor) is an active-site residue. Aspartate 136 is a binding site for Mg(2+). At 151–160 (VRLGTHPDWL) the chain is on the lumenal side. A helical transmembrane segment spans residues 161–179 (FFCSFIGMFMFYCAHWQTY). Topologically, residues 180–190 (VSGVLRFGKVD) are cytoplasmic. A helical transmembrane segment spans residues 191–207 (VTEIQIALVIVFVLSTF). At 208 to 222 (GGATMWDYTIPILEI) the chain is on the lumenal side. Residues 223–248 (KLKILPVLGVVGGAIFSCSNYFHVIL) form a helical membrane-spanning segment. Residues 249 to 265 (HGGVGKNGSTIAGTSVL) are Cytoplasmic-facing. The helical transmembrane segment at 266–281 (SPGLHIGIIIILAIMI) threads the bilayer. The Lumenal segment spans residues 282-293 (YKKSATNLFEKH). A helical transmembrane segment spans residues 294–316 (PCLYTLMFGCVFAKVSQKLVIAH). The Cytoplasmic segment spans residues 317 to 329 (MTKSELYLQDTVF). The chain crosses the membrane as a helical span at residues 330–339 (IGPGLLFLDQ). Over 340 to 346 (YFNNFVD) the chain is Lumenal. The helical transmembrane segment at 347-376 (EYIVLWIAMVISSLDMMRYFSALCLQISRH) threads the bilayer. Residues 377–406 (LHLSIFKTSCHQAPEQVQVLPPKSHQNNMD) are Cytoplasmic-facing.

The protein belongs to the CDP-alcohol phosphatidyltransferase class-I family. Requires Mg(2+) as cofactor. Mn(2+) is required as a cofactor.

It localises to the golgi apparatus membrane. It catalyses the reaction CDP-choline + a 1,2-diacyl-sn-glycerol = a 1,2-diacyl-sn-glycero-3-phosphocholine + CMP + H(+). It carries out the reaction 1-octadecanoyl-2-(5Z,8Z,11Z,14Z-eicosatetraenoyl)-sn-glycerol + CDP-choline = 1-octadecanoyl-2-(5Z,8Z,11Z,14Z-eicosatetraenoyl)-sn-glycero-3-phosphocholine + CMP + H(+). The catalysed reaction is 1-hexadecanoyl-2-(9Z-octadecenoyl)-sn-glycerol + CDP-choline = 1-hexadecanoyl-2-(9Z-octadecenoyl)-sn-glycero-3-phosphocholine + CMP + H(+). The enzyme catalyses 1-hexadecanoyl-2-(4Z,7Z,10Z,13Z,16Z,19Z-docosahexaenoyl)-sn-glycerol + CDP-choline = 1-hexadecanoyl-2-(4Z,7Z,10Z,13Z,16Z,19Z-docosahexaenoyl)-sn-glycero-3-phosphocholine + CMP + H(+). It catalyses the reaction 1,2-dioctanoyl-sn-glycerol + CDP-choline = 1,2-dioctanoyl-sn-glycero-3-phosphocholine + CMP + H(+). It participates in phospholipid metabolism; phosphatidylcholine biosynthesis; phosphatidylcholine from phosphocholine: step 2/2. Its function is as follows. Catalyzes the final step of de novo phosphatidylcholine (PC) synthesis, i.e. the transfer of choline phosphate from CDP-choline to the free hydroxyl of a diacylglycerol (DAG), producing a PC. It thereby plays a central role in the formation and maintenance of vesicular membranes. The protein is Cholinephosphotransferase 1 (CHPT1) of Bos taurus (Bovine).